The chain runs to 369 residues: Choline-phosphate cytidylyltransferase B (369 aa).

Residues 1-27 form a disordered region; that stretch reads MPVLTTDAESETGIPKSLSNEPPSETM. Positions 84, 85, 92, and 122 each coordinate CTP. The phosphocholine site is built by K122 and W151. Residues H168, D169, Y173, Q195, R196, T197, and I200 each contribute to the CTP site. Residues 309–369 are disordered; the sequence is RMLQALSPKQ…SMSEGDEDEK (61 aa). Phosphoserine is present on residues S315, S319, S322, S323, S329, S331, and S335. The span at 319-339 shows a compositional bias: low complexity; it reads SPVSSPTRSRSPSRSPSPTFS. Phosphothreonine is present on T345. S346, S349, S350, S355, S360, and S362 each carry phosphoserine. A compositionally biased stretch (low complexity) spans 351 to 362; that stretch reads PKAASASISSMS.

This sequence belongs to the cytidylyltransferase family. Homodimer. As to expression, highly expressed in brain (at protein level). Expressed in liver (at protein level). Expressed at lower levels in lung and gonads. Expressed in brain (at protein level). Expressed at lower levels in lung and gonads.

The protein resides in the endoplasmic reticulum. Its subcellular location is the cytoplasm. It carries out the reaction phosphocholine + CTP + H(+) = CDP-choline + diphosphate. It participates in phospholipid metabolism; phosphatidylcholine biosynthesis; phosphatidylcholine from phosphocholine: step 1/2. Functionally, catalyzes the key rate-limiting step in the CDP-choline pathway for phosphatidylcholine biosynthesis. Plays an important role in ovary maturation and the maintenance of sperm production. Catalyzes the key rate-limiting step in the CDP-choline pathway for phosphatidylcholine biosynthesis. The protein is Choline-phosphate cytidylyltransferase B (Pcyt1b) of Mus musculus (Mouse).